The following is a 48-amino-acid chain: LGEKGYSYSTGDSSVTVQHDTLPYSRYQGLYNYAHPGYNTYPYNQYQG.

This Limulus polyphemus (Atlantic horseshoe crab) protein is Cuticle protein 10.